A 145-amino-acid polypeptide reads, in one-letter code: Selenoprotein M (145 aa).

A signal peptide spans 1 to 23; it reads MSLLLPPLALLLLLAALVAPATA. Active-site nucleophile residues include Cys-45 and Sec-48. The segment at residues 45-48 is a cross-link (cysteinyl-selenocysteine (Cys-Sec)); it reads CGGU. A non-standard amino acid (selenocysteine) is located at residue Sec-48.

This sequence belongs to the selenoprotein M/F family. In terms of tissue distribution, widely expressed.

Its subcellular location is the cytoplasm. The protein localises to the perinuclear region. It localises to the endoplasmic reticulum. It is found in the golgi apparatus. Functionally, may function as a thiol-disulfide oxidoreductase that participates in disulfide bond formation. This is Selenoprotein M from Homo sapiens (Human).